The sequence spans 631 residues: Forkhead box protein O1 (631 aa).

The span at 1-11 (MAEAPQPPPPL) shows a compositional bias: pro residues. Disordered regions lie at residues 1–57 (MAEA…PAAG), 90–147 (DIRQ…SRRN), 223–324 (SSWW…MPEQ), and 372–404 (PNSSTQSSPASMMQQSGYLFTSPNTSLGSPNSE). Low complexity-rich tracts occupy residues 37 to 48 (NPSSSANSSPAP) and 100 to 135 (QQQQQHSQQQQEALTLLAPSVPSALSPASSPSPLGA). The segment at residues 149-243 (WGNLSYADLI…KNGKSPRRRA (95 aa)) is a DNA-binding region (fork-head). Over residues 253-264 (AKSRGRAAKKKA) the composition is skewed to basic residues. Over residues 265 to 282 (SMQSSQDGSSDSPGSQFS) the composition is skewed to low complexity. 2 stretches are compositionally biased toward polar residues: residues 303-315 (RPRTSSNASTISG) and 381-403 (ASMMQQSGYLFTSPNTSLGSPNS).

In terms of processing, phosphorylated by AKT1; insulin-induced. IGF1 rapidly induces phosphorylation of Thr-28, Ser-245 and Ser-308. Phosphorylation of Ser-245 decreases DNA-binding activity and promotes the phosphorylation of Thr-28, and Ser-308, which leads to nuclear exclusion and loss of function. Phosphorylation of Ser-318 is independent of IGF1 and leads to reduced function. Localized to the animal hemisphere during early cleavage stages. At early tadpole stages, expressed in the branchial arches, pronephros and liver. Within the head, expressed in the forming thyroid gland and in head mesenchyme anterior to the eyes.

Its subcellular location is the cytoplasm. It is found in the nucleus. Transcription factor that regulates metabolic homeostasis in response to oxidative stress. Binds to the consensus sequence 5'-TT[G/A]TTTTG-3' and the related Daf-16 family binding element (DBE) with consensus sequence 5'-TT[G/A]TTTAC-3'. Main regulator of redox balance and osteoblast numbers and controls bone mass. Orchestrates the endocrine function of the skeleton in regulating glucose metabolism. Also acts as a key regulator of chondrogenic commitment of skeletal progenitor cells in response to lipid availability: when lipids levels are low, translocates to the nucleus and promotes expression of sox9, which induces chondrogenic commitment and suppresses fatty acid oxidation. Acts synergistically with atf4 to suppress osteocalcin/bglap activity, increasing glucose levels and triggering glucose intolerance and insulin insensitivity. Also suppresses the transcriptional activity of runx2, an upstream activator of osteocalcin/bglap. May act as a positive regulator of apoptosis in cardiac smooth muscle cells as a result of its transcriptional activation of pro-apoptotic genes. The sequence is that of Forkhead box protein O1 from Xenopus laevis (African clawed frog).